The primary structure comprises 448 residues: tRNA(Ile)-lysidine synthase (448 aa).

25 to 30 contributes to the ATP binding site; the sequence is SGGSDS.

The protein belongs to the tRNA(Ile)-lysidine synthase family.

It is found in the cytoplasm. The enzyme catalyses cytidine(34) in tRNA(Ile2) + L-lysine + ATP = lysidine(34) in tRNA(Ile2) + AMP + diphosphate + H(+). Ligates lysine onto the cytidine present at position 34 of the AUA codon-specific tRNA(Ile) that contains the anticodon CAU, in an ATP-dependent manner. Cytidine is converted to lysidine, thus changing the amino acid specificity of the tRNA from methionine to isoleucine. In Brucella suis biovar 1 (strain 1330), this protein is tRNA(Ile)-lysidine synthase.